The chain runs to 394 residues: 1-deoxy-D-xylulose 5-phosphate reductoisomerase (394 aa).

NADPH is bound by residues Thr-10, Gly-11, Ser-12, Ile-13, Asn-38, and Asn-125. Lys-126 contributes to the 1-deoxy-D-xylulose 5-phosphate binding site. An NADPH-binding site is contributed by Glu-127. Position 151 (Asp-151) interacts with Mn(2+). 1-deoxy-D-xylulose 5-phosphate contacts are provided by Ser-152, Glu-153, Ser-182, and His-205. Glu-153 contacts Mn(2+). Gly-211 serves as a coordination point for NADPH. Residues Ser-218, Asn-223, Lys-224, and Glu-227 each coordinate 1-deoxy-D-xylulose 5-phosphate. A Mn(2+)-binding site is contributed by Glu-227.

It belongs to the DXR family. Mg(2+) is required as a cofactor. Mn(2+) serves as cofactor.

The catalysed reaction is 2-C-methyl-D-erythritol 4-phosphate + NADP(+) = 1-deoxy-D-xylulose 5-phosphate + NADPH + H(+). It participates in isoprenoid biosynthesis; isopentenyl diphosphate biosynthesis via DXP pathway; isopentenyl diphosphate from 1-deoxy-D-xylulose 5-phosphate: step 1/6. Its function is as follows. Catalyzes the NADPH-dependent rearrangement and reduction of 1-deoxy-D-xylulose-5-phosphate (DXP) to 2-C-methyl-D-erythritol 4-phosphate (MEP). This Methylococcus capsulatus (strain ATCC 33009 / NCIMB 11132 / Bath) protein is 1-deoxy-D-xylulose 5-phosphate reductoisomerase.